We begin with the raw amino-acid sequence, 200 residues long: 3-isopropylmalate dehydratase small subunit (200 aa).

Belongs to the LeuD family. LeuD type 1 subfamily. Heterodimer of LeuC and LeuD.

It carries out the reaction (2R,3S)-3-isopropylmalate = (2S)-2-isopropylmalate. Its pathway is amino-acid biosynthesis; L-leucine biosynthesis; L-leucine from 3-methyl-2-oxobutanoate: step 2/4. In terms of biological role, catalyzes the isomerization between 2-isopropylmalate and 3-isopropylmalate, via the formation of 2-isopropylmaleate. This is 3-isopropylmalate dehydratase small subunit from Campylobacter jejuni subsp. jejuni serotype O:23/36 (strain 81-176).